The sequence spans 126 residues: Urease subunit beta (126 aa).

It belongs to the urease beta subunit family. As to quaternary structure, heterotrimer of UreA (gamma), UreB (beta) and UreC (alpha) subunits. Three heterotrimers associate to form the active enzyme.

It localises to the cytoplasm. The catalysed reaction is urea + 2 H2O + H(+) = hydrogencarbonate + 2 NH4(+). The protein operates within nitrogen metabolism; urea degradation; CO(2) and NH(3) from urea (urease route): step 1/1. The polypeptide is Urease subunit beta (Sporosarcina pasteurii (Bacillus pasteurii)).